Consider the following 162-residue polypeptide: NADH-ubiquinone oxidoreductase subunit 8 (162 aa).

4Fe-4S ferredoxin-type domains are found at residues 54 to 83 (RRYQ…IESE) and 93 to 122 (TRYD…EGPN). [4Fe-4S] cluster contacts are provided by C63, C66, C69, C73, C102, C105, C108, and C112.

This sequence belongs to the complex I 23 kDa subunit family. The cofactor is [4Fe-4S] cluster.

It localises to the mitochondrion. It catalyses the reaction a ubiquinone + NADH + 5 H(+)(in) = a ubiquinol + NAD(+) + 4 H(+)(out). Core subunit of the mitochondrial membrane respiratory chain NADH dehydrogenase (Complex I) that is believed to belong to the minimal assembly required for catalysis. Complex I functions in the transfer of electrons from NADH to the respiratory chain. The immediate electron acceptor for the enzyme is believed to be ubiquinone. May donate electrons to ubiquinone. This is NADH-ubiquinone oxidoreductase subunit 8 (NAD8) from Reclinomonas americana.